An 80-amino-acid polypeptide reads, in one-letter code: Translation initiation factor IF-1, chloroplastic (80 aa).

Positions 1–72 (MKKQNLIDME…TKGRIIYRLR (72 aa)) constitute an S1-like domain.

Belongs to the IF-1 family. As to quaternary structure, component of the 30S ribosomal translation pre-initiation complex which assembles on the 30S ribosome in the order IF-2 and IF-3, IF-1 and N-formylmethionyl-tRNA(fMet); mRNA recruitment can occur at any time during PIC assembly.

It localises to the plastid. It is found in the chloroplast. Its function is as follows. One of the essential components for the initiation of protein synthesis. Stabilizes the binding of IF-2 and IF-3 on the 30S subunit to which N-formylmethionyl-tRNA(fMet) subsequently binds. Helps modulate mRNA selection, yielding the 30S pre-initiation complex (PIC). Upon addition of the 50S ribosomal subunit IF-1, IF-2 and IF-3 are released leaving the mature 70S translation initiation complex. The protein is Translation initiation factor IF-1, chloroplastic of Adiantum capillus-veneris (Maidenhair fern).